The chain runs to 526 residues: Cytochrome P450 monooxygenase 58 (526 aa).

3 consecutive transmembrane segments (helical) span residues isoleucine 13 to isoleucine 33, phenylalanine 115 to lysine 135, and isoleucine 306 to leucine 326. Position 451 (cysteine 451) interacts with heme.

This sequence belongs to the cytochrome P450 family. It depends on heme as a cofactor.

It localises to the membrane. The protein operates within secondary metabolite biosynthesis. Functionally, cytochrome P450 monooxygenase that is able to use delta(6)-protoilludene as a substrate to produce delta(6)-protoilludene-8-ol. This chain is Cytochrome P450 monooxygenase 58, found in Postia placenta (strain ATCC 44394 / Madison 698-R) (Brown rot fungus).